The primary structure comprises 199 residues: GTP cyclohydrolase-2 (199 aa).

GTP is bound at residue 49–53; it reads RIHSE. Zn(2+)-binding residues include Cys54, Cys65, and Cys67. Residues Gln70, 92–94, and Thr114 each bind GTP; that span reads EGR. Catalysis depends on Asp126, which acts as the Proton acceptor. The active-site Nucleophile is the Arg128. Positions 149 and 154 each coordinate GTP.

This sequence belongs to the GTP cyclohydrolase II family. As to quaternary structure, homodimer. It depends on Zn(2+) as a cofactor.

The catalysed reaction is GTP + 4 H2O = 2,5-diamino-6-hydroxy-4-(5-phosphoribosylamino)-pyrimidine + formate + 2 phosphate + 3 H(+). The protein operates within cofactor biosynthesis; riboflavin biosynthesis; 5-amino-6-(D-ribitylamino)uracil from GTP: step 1/4. In terms of biological role, catalyzes the conversion of GTP to 2,5-diamino-6-ribosylamino-4(3H)-pyrimidinone 5'-phosphate (DARP), formate and pyrophosphate. This is GTP cyclohydrolase-2 from Proteus mirabilis (strain HI4320).